Here is a 257-residue protein sequence, read N- to C-terminus: Type III pantothenate kinase (257 aa).

24 to 31 lines the ATP pocket; that stretch reads MIGNSRLH. Residues Y96 and 100 to 103 contribute to the substrate site; that span reads GIDR. D102 acts as the Proton acceptor in catalysis. Residue D122 coordinates K(+). T125 is a binding site for ATP. T180 provides a ligand contact to substrate.

The protein belongs to the type III pantothenate kinase family. In terms of assembly, homodimer. It depends on NH4(+) as a cofactor. Requires K(+) as cofactor.

The protein localises to the cytoplasm. The catalysed reaction is (R)-pantothenate + ATP = (R)-4'-phosphopantothenate + ADP + H(+). The protein operates within cofactor biosynthesis; coenzyme A biosynthesis; CoA from (R)-pantothenate: step 1/5. Functionally, catalyzes the phosphorylation of pantothenate (Pan), the first step in CoA biosynthesis. The chain is Type III pantothenate kinase from Synechocystis sp. (strain ATCC 27184 / PCC 6803 / Kazusa).